The sequence spans 352 residues: 7,8-didemethyl-8-hydroxy-5-deazariboflavin synthase (352 aa).

In terms of domain architecture, Radical SAM core spans 35 to 275 (ITFSKNAFIP…EDISIQVPPN (241 aa)). 3 residues coordinate [4Fe-4S] cluster: cysteine 49, cysteine 53, and cysteine 56.

Belongs to the radical SAM superfamily. CofG family. In terms of assembly, consists of two subunits, CofG and CofH. Requires [4Fe-4S] cluster as cofactor.

It carries out the reaction 5-amino-5-(4-hydroxybenzyl)-6-(D-ribitylimino)-5,6-dihydrouracil + S-adenosyl-L-methionine = 7,8-didemethyl-8-hydroxy-5-deazariboflavin + 5'-deoxyadenosine + L-methionine + NH4(+) + H(+). Its pathway is cofactor biosynthesis; coenzyme F0 biosynthesis. Functionally, catalyzes the radical-mediated synthesis of 7,8-didemethyl-8-hydroxy-5-deazariboflavin from 5-amino-5-(4-hydroxybenzyl)-6-(D-ribitylimino)-5,6-dihydrouracil. The chain is 7,8-didemethyl-8-hydroxy-5-deazariboflavin synthase from Methanococcus maripaludis (strain C6 / ATCC BAA-1332).